The following is a 481-amino-acid chain: GDP-fucose protein O-fucosyltransferase 2 (481 aa).

The signal sequence occupies residues 1 to 22 (MKGRAHIWVALLLACLPPRFRN). GDP-beta-L-fucose-binding positions include 59–63 (GEGFN), 287–289 (HLR), Asp365, and 382–383 (RF). Residue Glu60 is the Proton acceptor of the active site.

This sequence belongs to the glycosyltransferase 68 family.

Its subcellular location is the endoplasmic reticulum. It carries out the reaction L-seryl-[protein] + GDP-beta-L-fucose = 3-O-(alpha-L-fucosyl)-L-seryl-[protein] + GDP + H(+). The catalysed reaction is L-threonyl-[protein] + GDP-beta-L-fucose = 3-O-(alpha-L-fucosyl)-L-threonyl-[protein] + GDP + H(+). The protein operates within protein modification; protein glycosylation. Its function is as follows. Catalyzes the reaction that attaches fucose through an O-glycosidic linkage to a conserved serine or threonine residue in the consensus sequence C1-X-X-S/T-C2 of thrombospondin type I repeats (TSRs) where C1 and C2 are the first and second cysteines of the repeat, respectively. O-fucosylates sporozoite proteins CSP and TRAP. O-fucosylation regulates stability and intracellular trafficking of TRAP but not of CSP. Probably by regulating protein O-fucosylation, may play a role in parasite transmission to the mosquito vector and/or infection of the vertebrate host hepatocytes; however, POFUT2 involvement in transmission/infection is controversial. In Plasmodium vivax (strain Salvador I), this protein is GDP-fucose protein O-fucosyltransferase 2.